The chain runs to 114 residues: Anti-adapter protein IraM (114 aa).

The protein belongs to the IraM/RssC family.

The protein resides in the cytoplasm. Involved in the stabilization of the sigma stress factor RpoS. This Citrobacter koseri (strain ATCC BAA-895 / CDC 4225-83 / SGSC4696) protein is Anti-adapter protein IraM.